A 272-amino-acid chain; its full sequence is Dermonecrotic toxin LvSicTox-alphaIC1biii (272 aa).

His-5 is an active-site residue. Positions 25 and 27 each coordinate Mg(2+). His-41 serves as the catalytic Nucleophile. 2 disulfide bridges follow: Cys-45–Cys-51 and Cys-47–Cys-189. Asp-84 serves as a coordination point for Mg(2+).

Belongs to the arthropod phospholipase D family. Class II subfamily. The cofactor is Mg(2+). Expressed by the venom gland.

It localises to the secreted. The catalysed reaction is an N-(acyl)-sphingosylphosphocholine = an N-(acyl)-sphingosyl-1,3-cyclic phosphate + choline. It carries out the reaction an N-(acyl)-sphingosylphosphoethanolamine = an N-(acyl)-sphingosyl-1,3-cyclic phosphate + ethanolamine. It catalyses the reaction a 1-acyl-sn-glycero-3-phosphocholine = a 1-acyl-sn-glycero-2,3-cyclic phosphate + choline. The enzyme catalyses a 1-acyl-sn-glycero-3-phosphoethanolamine = a 1-acyl-sn-glycero-2,3-cyclic phosphate + ethanolamine. In terms of biological role, dermonecrotic toxins cleave the phosphodiester linkage between the phosphate and headgroup of certain phospholipids (sphingolipid and lysolipid substrates), forming an alcohol (often choline) and a cyclic phosphate. This toxin acts on sphingomyelin (SM). It may also act on ceramide phosphoethanolamine (CPE), lysophosphatidylcholine (LPC) and lysophosphatidylethanolamine (LPE), but not on lysophosphatidylserine (LPS), and lysophosphatidylglycerol (LPG). It acts by transphosphatidylation, releasing exclusively cyclic phosphate products as second products. Induces dermonecrosis, hemolysis, increased vascular permeability, edema, inflammatory response, and platelet aggregation. The sequence is that of Dermonecrotic toxin LvSicTox-alphaIC1biii from Loxosceles variegata (Recluse spider).